The primary structure comprises 277 residues: Orotidine 5'-phosphate decarboxylase (277 aa).

Residues Asp-40, 62 to 64, 93 to 102, Tyr-229, and Arg-247 each bind substrate; these read KTH and DRKFIDIGNT. Lys-95 (proton donor) is an active-site residue.

This sequence belongs to the OMP decarboxylase family.

The catalysed reaction is orotidine 5'-phosphate + H(+) = UMP + CO2. It functions in the pathway pyrimidine metabolism; UMP biosynthesis via de novo pathway; UMP from orotate: step 2/2. This chain is Orotidine 5'-phosphate decarboxylase (pyrG), found in Aspergillus oryzae (strain ATCC 42149 / RIB 40) (Yellow koji mold).